Here is a 100-residue protein sequence, read N- to C-terminus: Small ribosomal subunit protein uS14c (100 aa).

This sequence belongs to the universal ribosomal protein uS14 family. Part of the 30S ribosomal subunit.

It is found in the plastid. It localises to the chloroplast. Its function is as follows. Binds 16S rRNA, required for the assembly of 30S particles. The protein is Small ribosomal subunit protein uS14c of Glycine max (Soybean).